Consider the following 112-residue polypeptide: Nucleoid-associated protein CPR_0056 (112 aa).

Positions 91–100 (ASEETSEKMG) are enriched in basic and acidic residues. Residues 91 to 112 (ASEETSEKMGKLTGGMGMPGLF) form a disordered region. Residues 102–112 (LTGGMGMPGLF) show a composition bias toward gly residues.

It belongs to the YbaB/EbfC family. As to quaternary structure, homodimer.

The protein resides in the cytoplasm. It localises to the nucleoid. Its function is as follows. Binds to DNA and alters its conformation. May be involved in regulation of gene expression, nucleoid organization and DNA protection. The sequence is that of Nucleoid-associated protein CPR_0056 from Clostridium perfringens (strain SM101 / Type A).